Consider the following 219-residue polypeptide: MTKEGKLKLFSTYTIYGMTAEKFSNGRSNIEVVKVMLDSGIKIIQYREKYKSLKEKYKECLEIRKLTEDYEALLIVNDHADLCQMVGADGVHLGQEDLPADEVRKLLGDKFIIGVTTHTKDQVLKAKEDGADYVGLGPVFASFTKDNPHPPIGLEMVKWAAENSPLPFVAIGGIKEHNLKEVLASGARCICAVTEIVGADDIRKKIESLFKILKSFERS.

4-amino-2-methyl-5-(diphosphooxymethyl)pyrimidine-binding positions include 45 to 49 and N77; that span reads QYREK. Mg(2+)-binding residues include D78 and D97. T116 provides a ligand contact to 4-amino-2-methyl-5-(diphosphooxymethyl)pyrimidine. 142-144 provides a ligand contact to 2-[(2R,5Z)-2-carboxy-4-methylthiazol-5(2H)-ylidene]ethyl phosphate; the sequence is SFT. K145 contacts 4-amino-2-methyl-5-(diphosphooxymethyl)pyrimidine. 2-[(2R,5Z)-2-carboxy-4-methylthiazol-5(2H)-ylidene]ethyl phosphate-binding positions include G173 and 193–194; that span reads VT.

The protein belongs to the thiamine-phosphate synthase family. Mg(2+) is required as a cofactor.

The enzyme catalyses 2-[(2R,5Z)-2-carboxy-4-methylthiazol-5(2H)-ylidene]ethyl phosphate + 4-amino-2-methyl-5-(diphosphooxymethyl)pyrimidine + 2 H(+) = thiamine phosphate + CO2 + diphosphate. The catalysed reaction is 2-(2-carboxy-4-methylthiazol-5-yl)ethyl phosphate + 4-amino-2-methyl-5-(diphosphooxymethyl)pyrimidine + 2 H(+) = thiamine phosphate + CO2 + diphosphate. It carries out the reaction 4-methyl-5-(2-phosphooxyethyl)-thiazole + 4-amino-2-methyl-5-(diphosphooxymethyl)pyrimidine + H(+) = thiamine phosphate + diphosphate. It participates in cofactor biosynthesis; thiamine diphosphate biosynthesis; thiamine phosphate from 4-amino-2-methyl-5-diphosphomethylpyrimidine and 4-methyl-5-(2-phosphoethyl)-thiazole: step 1/1. In terms of biological role, condenses 4-methyl-5-(beta-hydroxyethyl)thiazole monophosphate (THZ-P) and 2-methyl-4-amino-5-hydroxymethyl pyrimidine pyrophosphate (HMP-PP) to form thiamine monophosphate (TMP). The polypeptide is Thiamine-phosphate synthase (Caldicellulosiruptor bescii (strain ATCC BAA-1888 / DSM 6725 / KCTC 15123 / Z-1320) (Anaerocellum thermophilum)).